The chain runs to 1766 residues: E3 ubiquitin-protein ligase listerin (1766 aa).

A compositionally biased stretch (basic residues) spans 1 to 11; that stretch reads MGGKNKQRTKG. The disordered stretch occupies residues 1–20; it reads MGGKNKQRTKGNVRPSSSGR. HEAT repeat units lie at residues 100–138, 193–231, 292–329, 335–372, and 512–549; these read KGVLPYWPRIYCKISLDHDRRVREATQQSFEQLILKVKK, VLQDHLLKETPDTLSDPQTVPEEEREAKFFRILTCSLLA, AEAPRVCPAVLLSIDDSDAVVCPALWEAVLHAIATIED, NARKGVLPKLWTVLREGGRGLATVIYPNILPFISKVPP, and EKTLFAISDMLEVLQNPKTATKPNNRKSLKVKFSDEDE. The interval 529–567 is disordered; the sequence is KTATKPNNRKSLKVKFSDEDESERNTENGKITEVRSNSD. The span at 551 to 566 shows a compositional bias: basic and acidic residues; the sequence is ERNTENGKITEVRSNS. HEAT repeat units follow at residues 606–644, 672–710, 916–953, 1184–1227, 1314–1355, and 1406–1447; these read EQHLKFLSALLNFFSSNRVFQVLLEQGSNAGCPPAESQE, KDMHFLVDILYSVLNCCNSDDERKVILDDLTKMDLKWIV, QVLISAVSDLLSTLLEADRQSGCLVGAYVEHVMPNRTE, HLLP…MIRY, GIHN…YISK, and SKLM…TQEL. Residues 1715 to 1762 form an RING-type zinc finger; it reads CMICFSVIHGSNYSLPKKACRTCKKKFHSACLYKWFTSSNKSTCPLCR.

This sequence belongs to the LTN1 family. Component of the ribosome quality control complex (RQC), composed of at least the E3 ubiquitin ligase LTN1 and NEMF associated with the 60S ribosomal subunit. The complex probably also contains TCF25 as well as VCP/p97 and its ubiquitin-binding cofactors.

Its subcellular location is the cytoplasm. The protein resides in the cytosol. It carries out the reaction S-ubiquitinyl-[E2 ubiquitin-conjugating enzyme]-L-cysteine + [acceptor protein]-L-lysine = [E2 ubiquitin-conjugating enzyme]-L-cysteine + N(6)-ubiquitinyl-[acceptor protein]-L-lysine.. It participates in protein modification; protein ubiquitination. Functionally, E3 ubiquitin-protein ligase component of the ribosome quality control complex (RQC), a ribosome-associated complex that mediates ubiquitination and extraction of incompletely synthesized nascent chains for proteasomal degradation. Within the RQC complex, LTN1 is recruited to stalled 60S ribosomal subunits by NEMF and mediates ubiquitination of stalled nascent chains. Ubiquitination leads to VCP/p97 recruitment for extraction and degradation of the incomplete translation product. The chain is E3 ubiquitin-protein ligase listerin (LTN1) from Gallus gallus (Chicken).